The chain runs to 144 residues: Large ribosomal subunit protein uL16 (144 aa).

Basic residues predominate over residues 1-19 (MLLPKRVKYRRQHRPKTTG). The segment at 1 to 23 (MLLPKRVKYRRQHRPKTTGRSKG) is disordered.

It belongs to the universal ribosomal protein uL16 family. Part of the 50S ribosomal subunit.

Binds 23S rRNA and is also seen to make contacts with the A and possibly P site tRNAs. The protein is Large ribosomal subunit protein uL16 of Staphylococcus haemolyticus (strain JCSC1435).